We begin with the raw amino-acid sequence, 291 residues long: UDP-N-acetylenolpyruvoylglucosamine reductase (291 aa).

The FAD-binding PCMH-type domain maps to 22-187 (RIGGPARYFK…ASATFQLTKD (166 aa)). Residue arginine 166 is part of the active site. Cysteine 214 functions as the Proton donor in the catalytic mechanism. Glutamate 283 is an active-site residue.

The protein belongs to the MurB family. FAD serves as cofactor.

The protein localises to the cytoplasm. It catalyses the reaction UDP-N-acetyl-alpha-D-muramate + NADP(+) = UDP-N-acetyl-3-O-(1-carboxyvinyl)-alpha-D-glucosamine + NADPH + H(+). The protein operates within cell wall biogenesis; peptidoglycan biosynthesis. Functionally, cell wall formation. In Chlamydia trachomatis serovar L2 (strain ATCC VR-902B / DSM 19102 / 434/Bu), this protein is UDP-N-acetylenolpyruvoylglucosamine reductase.